We begin with the raw amino-acid sequence, 257 residues long: uncharacterized protein (257 aa).

7 N-linked (GlcNAc...) asparagine; by host glycosylation sites follow: Asn-61, Asn-95, Asn-102, Asn-111, Asn-139, Asn-148, and Asn-152. Residues 233 to 253 (WYIIGGIFWVIVLIILVIFII) traverse the membrane as a helical segment.

The protein resides in the host membrane. Its subcellular location is the virion. This is an uncharacterized protein from Acanthamoeba polyphaga (Amoeba).